The primary structure comprises 193 residues: MTPRPGGEWSSALSHLALGAVSLHAALSTAQANRGAAAGFLLQALATATMLASGLGTDEDCLAGAWVATVIGLPLLAFDFHWVNGDCSSANLLLGGGMVLAVAGDHLGAEGRSVAGQAVVLVVAVTILIVAVFTTNSYGMWGGVMLGAAGLLSRLEEDRLMLLLPKEDICRWALAGGSWAYHRALHTQRLQWE.

Residues 1–32 (MTPRPGGEWSSALSHLALGAVSLHAALSTAQA) form the signal peptide. Transmembrane regions (helical) follow at residues 35–55 (GAAA…ASGL), 63–83 (AGAW…FHWV), 89–109 (SANL…HLGA), and 114–134 (VAGQ…AVFT).

It localises to the membrane. The polypeptide is Transmembrane protein 276 (Bos taurus (Bovine)).